The primary structure comprises 166 residues: MFLGYSDCVDPGLAVYRVSRSRLKLVLSFVWLVGLRLHDCAAFESCCYDITEAESNKAISRDKAAFTSSVSTRTPSLAIAPPPDRSMLLSREEELVPWSRLIITKQFYGGLIFHTTWVTGFVLLGLLTLFASLFRVPQSICRFCIDRLRDIARPLKYRYQRLVATV.

Belongs to the RL11 family. Interacts with host IQGAP1.

It is found in the host cytoplasm. Functionally, may play a role in rearrangement of cellular cytoskeleton towards an efficient viral assembly and spreading. The chain is Protein UL5 (UL5) from Human cytomegalovirus (strain AD169) (HHV-5).